Reading from the N-terminus, the 295-residue chain is Aspartate carbamoyltransferase catalytic subunit (295 aa).

Residues Arg49 and Thr50 each coordinate carbamoyl phosphate. Lys77 lines the L-aspartate pocket. Carbamoyl phosphate is bound by residues Arg99, His127, and Gln130. 2 residues coordinate L-aspartate: Arg161 and Arg212. The carbamoyl phosphate site is built by Gly251 and Pro252.

The protein belongs to the aspartate/ornithine carbamoyltransferase superfamily. ATCase family. As to quaternary structure, heterododecamer (2C3:3R2) of six catalytic PyrB chains organized as two trimers (C3), and six regulatory PyrI chains organized as three dimers (R2).

It catalyses the reaction carbamoyl phosphate + L-aspartate = N-carbamoyl-L-aspartate + phosphate + H(+). Its pathway is pyrimidine metabolism; UMP biosynthesis via de novo pathway; (S)-dihydroorotate from bicarbonate: step 2/3. Its function is as follows. Catalyzes the condensation of carbamoyl phosphate and aspartate to form carbamoyl aspartate and inorganic phosphate, the committed step in the de novo pyrimidine nucleotide biosynthesis pathway. The protein is Aspartate carbamoyltransferase catalytic subunit of Campylobacter jejuni (strain RM1221).